The primary structure comprises 346 residues: GTPase Obg (346 aa).

The 158-residue stretch at 1 to 158 (MFVDECVVKL…GTYRLVLKSI (158 aa)) folds into the Obg domain. The 174-residue stretch at 159–332 (ADVGLVGFPN…LKKELLKRVT (174 aa)) folds into the OBG-type G domain. Residues 165 to 172 (GFPNAGKS), 190 to 194 (FTTLH), 216 to 219 (DVPG), 286 to 289 (NKMD), and 313 to 315 (SCL) contribute to the GTP site. Mg(2+) contacts are provided by serine 172 and threonine 192.

The protein belongs to the TRAFAC class OBG-HflX-like GTPase superfamily. OBG GTPase family. As to quaternary structure, monomer. Requires Mg(2+) as cofactor.

It is found in the cytoplasm. In terms of biological role, an essential GTPase which binds GTP, GDP and possibly (p)ppGpp with moderate affinity, with high nucleotide exchange rates and a fairly low GTP hydrolysis rate. Plays a role in control of the cell cycle, stress response, ribosome biogenesis and in those bacteria that undergo differentiation, in morphogenesis control. The sequence is that of GTPase Obg from Opitutus terrae (strain DSM 11246 / JCM 15787 / PB90-1).